Here is a 475-residue protein sequence, read N- to C-terminus: Probable GABA permease (475 aa).

The next 12 helical transmembrane spans lie at Val-27–Ala-47, Ile-48–Leu-68, Leu-105–Leu-125, Ala-127–Val-147, Phe-163–Val-183, Ala-211–Ile-231, Val-250–Pro-270, Leu-296–Thr-316, Pro-345–Pro-365, Val-368–Ala-388, Pro-413–Met-433, and His-438–Ala-458.

This sequence belongs to the amino acid-polyamine-organocation (APC) superfamily. Amino acid transporter (AAT) (TC 2.A.3.1) family.

It localises to the membrane. Its function is as follows. Involved in the degradation of beta-alanine. In Pseudomonas aeruginosa (strain ATCC 15692 / DSM 22644 / CIP 104116 / JCM 14847 / LMG 12228 / 1C / PRS 101 / PAO1), this protein is Probable GABA permease (bauD).